Reading from the N-terminus, the 210-residue chain is Glycerol-3-phosphate acyltransferase (210 aa).

The next 5 helical transmembrane spans lie at 4–24 (LIVAVVAYLIGSVSFAVIVSA), 52–72 (AAILTLIGDAFKGWLAVWLTG), 82–102 (DTSVAIAAIAVFLGHLYPVFF), 118–138 (LAINPILGIATLLTWLIVAFF), and 159–179 (FLFGANVIALSIVAMSALLIW).

Belongs to the PlsY family. As to quaternary structure, probably interacts with PlsX.

It is found in the cell inner membrane. It carries out the reaction an acyl phosphate + sn-glycerol 3-phosphate = a 1-acyl-sn-glycero-3-phosphate + phosphate. The protein operates within lipid metabolism; phospholipid metabolism. In terms of biological role, catalyzes the transfer of an acyl group from acyl-phosphate (acyl-PO(4)) to glycerol-3-phosphate (G3P) to form lysophosphatidic acid (LPA). This enzyme utilizes acyl-phosphate as fatty acyl donor, but not acyl-CoA or acyl-ACP. This chain is Glycerol-3-phosphate acyltransferase, found in Paraburkholderia phymatum (strain DSM 17167 / CIP 108236 / LMG 21445 / STM815) (Burkholderia phymatum).